The sequence spans 178 residues: ATP synthase subunit delta (178 aa).

This sequence belongs to the ATPase delta chain family. F-type ATPases have 2 components, F(1) - the catalytic core - and F(0) - the membrane proton channel. F(1) has five subunits: alpha(3), beta(3), gamma(1), delta(1), epsilon(1). F(0) has three main subunits: a(1), b(2) and c(10-14). The alpha and beta chains form an alternating ring which encloses part of the gamma chain. F(1) is attached to F(0) by a central stalk formed by the gamma and epsilon chains, while a peripheral stalk is formed by the delta and b chains.

The protein resides in the cell inner membrane. F(1)F(0) ATP synthase produces ATP from ADP in the presence of a proton or sodium gradient. F-type ATPases consist of two structural domains, F(1) containing the extramembraneous catalytic core and F(0) containing the membrane proton channel, linked together by a central stalk and a peripheral stalk. During catalysis, ATP synthesis in the catalytic domain of F(1) is coupled via a rotary mechanism of the central stalk subunits to proton translocation. Its function is as follows. This protein is part of the stalk that links CF(0) to CF(1). It either transmits conformational changes from CF(0) to CF(1) or is implicated in proton conduction. In Dechloromonas aromatica (strain RCB), this protein is ATP synthase subunit delta.